The following is a 191-amino-acid chain: CASP-like protein 4C2 (191 aa).

The Cytoplasmic segment spans residues 1–29; sequence MEAADSATNNSKDTHFYGKSRAENRRRSD. The chain crosses the membrane as a helical span at residues 30–50; it reads AMLLLFRALTFSFSLAAVVVM. The Extracellular segment spans residues 51 to 72; the sequence is GTNRYRINPQLKVSWYDFEPYR. The helical transmembrane segment at 73–93 threads the bilayer; that stretch reads YVLAVNAIICIYSFVETWLAV. At 94-116 the chain is on the cytoplasmic side; that stretch reads YTYLQGSYLLPEIFQVWFDYGHD. The helical transmembrane segment at 117–137 threads the bilayer; the sequence is QGFAYLLFSANSAGVAMAQLL. At 138 to 161 the chain is on the extracellular side; that stretch reads QSGNTLIHGAYHCTEAGGYCTQAR. Residues 162-182 form a helical membrane-spanning segment; that stretch reads VSIALGFVAFLFLALSSLLTG. Residues 183-191 lie on the Cytoplasmic side of the membrane; the sequence is LRVARWYLR.

Belongs to the Casparian strip membrane proteins (CASP) family. As to quaternary structure, homodimer and heterodimers.

Its subcellular location is the cell membrane. The sequence is that of CASP-like protein 4C2 from Physcomitrium patens (Spreading-leaved earth moss).